A 669-amino-acid polypeptide reads, in one-letter code: Small ribosomal subunit protein mS39 (669 aa).

The transit peptide at 1 to 13 (MAAPCVRLGSVRC) directs the protein to the mitochondrion. PPR repeat units follow at residues 129–163 (IEGV…GTAP), 164–199 (SLET…DDQD), 209–239 (RPGQ…MPER), 240–274 (NAHS…RLTA), 275–314 (DVQT…NVRP), 315–351 (NLLT…NIEP), 352–392 (SLGT…FTLR), 396–430 (DVYF…DNRG), 438–472 (QSTY…LYYP), 473–507 (NSRG…GHSN), and 556–590 (SSAS…HRVP). A disordered region spans residues 186 to 218 (DIQTSEQNQQDDQDQQETEDSKKRPGQYRKASE). Acidic residues predominate over residues 194–203 (QQDDQDQQET). The tract at residues 648–669 (EDLQKSHSSSSSSSESSDSDRE) is disordered. Residues 653–663 (SHSSSSSSSES) show a composition bias toward low complexity.

It belongs to the mitochondrion-specific ribosomal protein mS39 family.

The protein localises to the mitochondrion. Mitochondrial protein that may have a role in mitochondrial translation. The chain is Small ribosomal subunit protein mS39 (ptcd3) from Xenopus laevis (African clawed frog).